The chain runs to 334 residues: DNA-directed RNA polymerase subunit alpha (334 aa).

The tract at residues 1-234 (MQRSLNEFLT…QQLAVFVDFD (234 aa)) is alpha N-terminal domain (alpha-NTD). Residues 248-334 (IDPILLRPVD…IRGDDRVLGG (87 aa)) are alpha C-terminal domain (alpha-CTD).

The protein belongs to the RNA polymerase alpha chain family. Homodimer. The RNAP catalytic core consists of 2 alpha, 1 beta, 1 beta' and 1 omega subunit. When a sigma factor is associated with the core the holoenzyme is formed, which can initiate transcription.

The enzyme catalyses RNA(n) + a ribonucleoside 5'-triphosphate = RNA(n+1) + diphosphate. Functionally, DNA-dependent RNA polymerase catalyzes the transcription of DNA into RNA using the four ribonucleoside triphosphates as substrates. This chain is DNA-directed RNA polymerase subunit alpha, found in Hahella chejuensis (strain KCTC 2396).